The following is a 1156-amino-acid chain: Condensin-2 complex subunit G2 (1156 aa).

The HEAT repeat unit spans residues 460–498; it reads MLPALKFCLHDNSEKVRVAFVDMLLKIKAVRAAKFWKIC. The disordered stretch occupies residues 587 to 611; the sequence is PNEDTEDEDDDEGDGEGIVRGDSEK. The span at 589-601 shows a compositional bias: acidic residues; it reads EDTEDEDDDEGDG.

In terms of assembly, component of the condensin-2 complex, which contains the smc2 and smc4 heterodimer, and three non SMC subunits that probably regulate the complex: ncaph2, ncapd3 and ncapg2.

It localises to the nucleus. Its function is as follows. Regulatory subunit of the condensin-2 complex, a complex which establishes mitotic chromosome architecture and is involved in physical rigidity of the chromatid axis. This is Condensin-2 complex subunit G2 (ncapg2) from Xenopus laevis (African clawed frog).